Reading from the N-terminus, the 95-residue chain is Co-chaperonin GroES (95 aa).

It belongs to the GroES chaperonin family. Heptamer of 7 subunits arranged in a ring. Interacts with the chaperonin GroEL.

It localises to the cytoplasm. In terms of biological role, together with the chaperonin GroEL, plays an essential role in assisting protein folding. The GroEL-GroES system forms a nano-cage that allows encapsulation of the non-native substrate proteins and provides a physical environment optimized to promote and accelerate protein folding. GroES binds to the apical surface of the GroEL ring, thereby capping the opening of the GroEL channel. The sequence is that of Co-chaperonin GroES from Lachnoclostridium phytofermentans (strain ATCC 700394 / DSM 18823 / ISDg) (Clostridium phytofermentans).